Consider the following 154-residue polypeptide: UPF0178 protein GDI0551/Gdia_1457 (154 aa).

Belongs to the UPF0178 family.

This chain is UPF0178 protein GDI0551/Gdia_1457, found in Gluconacetobacter diazotrophicus (strain ATCC 49037 / DSM 5601 / CCUG 37298 / CIP 103539 / LMG 7603 / PAl5).